Here is a 206-residue protein sequence, read N- to C-terminus: Large ribosomal subunit protein mL62 (206 aa).

A mitochondrion-targeting transit peptide spans 1–29; sequence MATAWGLRWGLSRTGTLLLAPPARCARRA. Gln-90 is subject to N5-methylglutamine.

The protein belongs to the prokaryotic/mitochondrial release factor family. Mitochondrion-specific ribosomal protein mL62 subfamily. As to quaternary structure, component of the mitochondrial ribosome large subunit (39S) which comprises a 16S rRNA and about 50 distinct proteins. Methylation of glutamine in the GGQ triplet by HEMK1.

It localises to the mitochondrion. The catalysed reaction is an N-acyl-L-alpha-aminoacyl-tRNA + H2O = an N-acyl-L-amino acid + a tRNA + H(+). Essential peptidyl-tRNA hydrolase component of the mitochondrial large ribosomal subunit. Acts as a codon-independent translation release factor that has lost all stop codon specificity and directs the termination of translation in mitochondrion, possibly in case of abortive elongation. May be involved in the hydrolysis of peptidyl-tRNAs that have been prematurely terminated and thus in the recycling of stalled mitochondrial ribosomes. The polypeptide is Large ribosomal subunit protein mL62 (Mus musculus (Mouse)).